The chain runs to 177 residues: Large ribosomal subunit protein uL6 (177 aa).

The protein belongs to the universal ribosomal protein uL6 family. In terms of assembly, part of the 50S ribosomal subunit.

This protein binds to the 23S rRNA, and is important in its secondary structure. It is located near the subunit interface in the base of the L7/L12 stalk, and near the tRNA binding site of the peptidyltransferase center. In Polynucleobacter asymbioticus (strain DSM 18221 / CIP 109841 / QLW-P1DMWA-1) (Polynucleobacter necessarius subsp. asymbioticus), this protein is Large ribosomal subunit protein uL6.